The following is an 86-amino-acid chain: MKILVLAVVCTVLLQVALSADSEEVRDCIPTRHECTNNQQNCCEGHDCKCDYTEIGGAKKEICYCKKTLWQKTKDKLSTAGDILKS.

An N-terminal signal peptide occupies residues Met-1–Ser-19. The propeptide at Ala-20 to Arg-26 is removed in mature form. Positions Glu-23–Arg-26 match the Processing quadruplet motif motif. 4 disulfide bridges follow: Cys-28–Cys-43, Cys-35–Cys-48, Cys-42–Cys-65, and Cys-50–Cys-63.

Belongs to the neurotoxin 19 (CSTX) family. Contains 4 disulfide bonds. Post-translationally, cleavage of the propeptide depends on the processing quadruplet motif (XXXR, with at least one of X being E). Expressed by the venom gland.

Its subcellular location is the secreted. In terms of biological role, insect toxin. This chain is Latartoxin-1b, found in Lachesana tarabaevi (Spider).